We begin with the raw amino-acid sequence, 62 residues long: Venom peptide SjAPI-2 (62 aa).

Intrachain disulfides connect Cys-4/Cys-40, Cys-14/Cys-36, Cys-18/Cys-32, Cys-22/Cys-60, and Cys-42/Cys-54. The TIL domain maps to 4–60; that stretch reads CRISGEVFTWCGTTCPLTCENFRNPPKHCPQGCFVGCMCRRGLVRHRNGRCVRPPRC.

The protein belongs to the serine protease inhibitor-like (TIL domain-containing) family. As to expression, expressed by the venom gland.

The protein resides in the secreted. Functionally, serine protease inhibitor. The protein is Venom peptide SjAPI-2 of Scorpiops jendeki (Scorpion).